The sequence spans 1217 residues: Disease resistance protein RPS4 (1217 aa).

Residues 14-175 enclose the TIR domain; it reads PQHQVFINFR…EIVKAVKTAL (162 aa). NAD(+) is bound at residue 23–28; it reads RGADLR. The tract at residues 33 to 34 is important for interaction with RRS1; that stretch reads SH. The active site involves Glu88. The NB-ARC domain occupies 211-472; the sequence is EQRLKDLEEK…FRSQDKDYVE (262 aa). LRR repeat units follow at residues 581-606, 614-636, 637-659, 682-706, 708-728, 729-749, 750-774, 796-818, 819-842, 843-860, and 861-887; these read MGNL…KINI, LKEV…DFNP, INLV…DKDT, AEKL…MKKM, MLAF…EMNL, ISLK…PLIS, DNIE…KLQR, LKAL…EIDI, SFLN…SVQY, LCLS…GISQ, and LSQL…NLQC. The tract at residues 1161 to 1195 is disordered; it reads TTEGVDGRVNKKKKTRMDNGRPKKKQRSGRDDNQT. Positions 1170 to 1177 match the Nuclear localization signal motif; sequence NKKKKTRM.

It belongs to the disease resistance TIR-NB-LRR family. As to quaternary structure, interacts with EDS1. Interacts with SRFR1. Interacts with RRS1.

It is found in the endomembrane system. The protein resides in the cytoplasm. It localises to the nucleus. The catalysed reaction is NAD(+) + H2O = ADP-D-ribose + nicotinamide + H(+). Disease resistance (R) protein that specifically recognizes the AvrRps4 type III effector avirulence protein from P.syringae. Resistance proteins guard the plant against pathogens that contain an appropriate avirulence protein via an indirect interaction with this avirulence protein. That triggers a defense system including the hypersensitive response, which restricts the pathogen growth. Probably acts as a NAD(+) hydrolase (NADase): in response to activation, catalyzes cleavage of NAD(+) into ADP-D-ribose (ADPR) and nicotinamide; NAD(+) cleavage triggering a defense system that promotes cell death. The combined presence of both regular and alternative RPS4 transcripts with truncated open reading frames (ORFs) is necessary for function. RPS4 function is regulated at multiple levels, including gene expression, alternative splicing, and protein stability. When over-expressed, confers temperature-conditioned EDS1-dependent auto-immunity. Heterodimerization with RRS1 is required to form a functional complex to recognize AvrRps4 and PopP2. Abscisic acid deficiency enhances nuclear accumulation of RPS4 and its cell death-inducing activity. The protein is Disease resistance protein RPS4 of Arabidopsis thaliana (Mouse-ear cress).